Reading from the N-terminus, the 554-residue chain is MWLLAISLVGLLVVVVCVFLRFSKDKGLDGIVNEKKRDKNSAPRVSASGEDGTKNEQVEKKSDPSGGLGEENEKTNSESKVLSVPSDQNINKTLPVMLPSLELRKYDENETPGKVVNRRLLVSTNEMKYGRNGYEVFQGVYGRRSSVAVKCLDLAHTTEAFIQNEIDNHCLCDDHSNIIRFHGLEQDQSFAYICLEPWKCSLDDLIKLSVRRTKRDTQAVAPVDDLEKVMKRIKFWKEKGKPLPLTPMLKLMRDVVCGLAHLHKLKTIHRNLNPQNVLIIVKDMTLTAKISDMSLSKHLGGKKSSYKHLATCSGSSGWQAPEQLNKDKKKKEDFPADMFNFGCLLHYAVMGTHPFGSPSERDTNIKTNNKTNLSLVTNLEAINLIEQLLNYKPDLRPSATQVLLHPLFWDSEKRLFFLREASDRIELDITMWGDLNKTIAPRVLGESKDWASKLGKTFITHIENLAQAQPGQESRQYNRSYKYWSLRHLLRLIRNILSHHREILDDPKIKEMVGKVPEGLDIFFTARFPNLMMEIYAFISMHCKGEEAFEKYFN.

The first 17 residues, 1–17, serve as a signal peptide directing secretion; the sequence is MWLLAISLVGLLVVVVC. The tract at residues 36–85 is disordered; the sequence is KRDKNSAPRVSASGEDGTKNEQVEKKSDPSGGLGEENEKTNSESKVLSVP. Basic and acidic residues predominate over residues 51 to 63; that stretch reads DGTKNEQVEKKSD. The Protein kinase domain occupies 121 to 408; the sequence is LVSTNEMKYG…ATQVLLHPLF (288 aa). Lys-150 serves as a coordination point for ATP. The 144-residue stretch at 411 to 554 folds into the KEN domain; the sequence is SEKRLFFLRE…GEEAFEKYFN (144 aa).

This sequence belongs to the protein kinase superfamily. Ser/Thr protein kinase family.

The protein is Inactive serine/threonine-protein kinase/endoribonuclease IRE1-like of Arabidopsis thaliana (Mouse-ear cress).